A 300-amino-acid chain; its full sequence is 33 kDa chaperonin (300 aa).

Disulfide bonds link Cys235–Cys237 and Cys269–Cys272.

Belongs to the HSP33 family. In terms of processing, under oxidizing conditions two disulfide bonds are formed involving the reactive cysteines. Under reducing conditions zinc is bound to the reactive cysteines and the protein is inactive.

It is found in the cytoplasm. In terms of biological role, redox regulated molecular chaperone. Protects both thermally unfolding and oxidatively damaged proteins from irreversible aggregation. Plays an important role in the bacterial defense system toward oxidative stress. The chain is 33 kDa chaperonin from Pseudomonas fluorescens (strain SBW25).